Reading from the N-terminus, the 469-residue chain is Phosphoglucosamine mutase (469 aa).

Residue serine 117 is the Phosphoserine intermediate of the active site. 4 residues coordinate Mg(2+): serine 117, aspartate 263, aspartate 265, and aspartate 267. A Phosphoserine modification is found at serine 117.

It belongs to the phosphohexose mutase family. Requires Mg(2+) as cofactor. Post-translationally, activated by phosphorylation.

It carries out the reaction alpha-D-glucosamine 1-phosphate = D-glucosamine 6-phosphate. Its function is as follows. Catalyzes the conversion of glucosamine-6-phosphate to glucosamine-1-phosphate. The polypeptide is Phosphoglucosamine mutase (Anaeromyxobacter sp. (strain Fw109-5)).